A 278-amino-acid polypeptide reads, in one-letter code: Thiazole synthase (278 aa).

The active-site Schiff-base intermediate with DXP is the Lys107. 1-deoxy-D-xylulose 5-phosphate is bound by residues Gly168, 194 to 195, and 216 to 217; these read AG and AS.

The protein belongs to the ThiG family. Homotetramer. Forms heterodimers with either ThiH or ThiS.

The protein resides in the cytoplasm. The catalysed reaction is [ThiS sulfur-carrier protein]-C-terminal-Gly-aminoethanethioate + 2-iminoacetate + 1-deoxy-D-xylulose 5-phosphate = [ThiS sulfur-carrier protein]-C-terminal Gly-Gly + 2-[(2R,5Z)-2-carboxy-4-methylthiazol-5(2H)-ylidene]ethyl phosphate + 2 H2O + H(+). The protein operates within cofactor biosynthesis; thiamine diphosphate biosynthesis. Its function is as follows. Catalyzes the rearrangement of 1-deoxy-D-xylulose 5-phosphate (DXP) to produce the thiazole phosphate moiety of thiamine. Sulfur is provided by the thiocarboxylate moiety of the carrier protein ThiS. In vitro, sulfur can be provided by H(2)S. In Corynebacterium urealyticum (strain ATCC 43042 / DSM 7109), this protein is Thiazole synthase.